A 252-amino-acid chain; its full sequence is dITP/XTP pyrophosphatase (252 aa).

7–12 (THNEGK) lines the substrate pocket. The active-site Proton acceptor is the Asp-74. Residue Asp-74 coordinates Mg(2+). Substrate is bound by residues Ser-75 and 193 to 196 (FGYD). The segment at 202–229 (DDQPAGRVSTEPDHEGEPLTSAEMTPAE) is disordered. Residues Lys-230 and 235 to 236 (HR) contribute to the substrate site.

This sequence belongs to the HAM1 NTPase family. Homodimer. Requires Mg(2+) as cofactor.

It carries out the reaction XTP + H2O = XMP + diphosphate + H(+). It catalyses the reaction dITP + H2O = dIMP + diphosphate + H(+). The catalysed reaction is ITP + H2O = IMP + diphosphate + H(+). Functionally, pyrophosphatase that catalyzes the hydrolysis of nucleoside triphosphates to their monophosphate derivatives, with a high preference for the non-canonical purine nucleotides XTP (xanthosine triphosphate), dITP (deoxyinosine triphosphate) and ITP. Seems to function as a house-cleaning enzyme that removes non-canonical purine nucleotides from the nucleotide pool, thus preventing their incorporation into DNA/RNA and avoiding chromosomal lesions. The chain is dITP/XTP pyrophosphatase from Bifidobacterium longum (strain DJO10A).